Reading from the N-terminus, the 153-residue chain is Xanthine-guanine phosphoribosyltransferase (153 aa).

Residues 37–38 (RG), R69, and 88–96 (DDLVDTGGT) contribute to the 5-phospho-alpha-D-ribose 1-diphosphate site. Residue R69 participates in GMP binding. D89 is a Mg(2+) binding site. Residues D92 and I135 each contribute to the guanine site. Xanthine-binding residues include D92 and I135. Residues 92 to 96 (DTGGT) and 134 to 135 (WI) each bind GMP.

Belongs to the purine/pyrimidine phosphoribosyltransferase family. XGPT subfamily. Homotetramer. Requires Mg(2+) as cofactor.

It localises to the cell inner membrane. The catalysed reaction is GMP + diphosphate = guanine + 5-phospho-alpha-D-ribose 1-diphosphate. It carries out the reaction XMP + diphosphate = xanthine + 5-phospho-alpha-D-ribose 1-diphosphate. The enzyme catalyses IMP + diphosphate = hypoxanthine + 5-phospho-alpha-D-ribose 1-diphosphate. Its pathway is purine metabolism; GMP biosynthesis via salvage pathway; GMP from guanine: step 1/1. It participates in purine metabolism; XMP biosynthesis via salvage pathway; XMP from xanthine: step 1/1. Functionally, purine salvage pathway enzyme that catalyzes the transfer of the ribosyl-5-phosphate group from 5-phospho-alpha-D-ribose 1-diphosphate (PRPP) to the N9 position of the 6-oxopurines guanine and xanthine to form the corresponding ribonucleotides GMP (guanosine 5'-monophosphate) and XMP (xanthosine 5'-monophosphate), with the release of PPi. To a lesser extent, also acts on hypoxanthine. This Proteus mirabilis (strain HI4320) protein is Xanthine-guanine phosphoribosyltransferase.